The chain runs to 128 residues: Sulfurtransferase TusD (128 aa).

Cysteine 78 acts as the Cysteine persulfide intermediate in catalysis.

This sequence belongs to the DsrE/TusD family. As to quaternary structure, heterohexamer, formed by a dimer of trimers. The hexameric TusBCD complex contains 2 copies each of TusB, TusC and TusD. The TusBCD complex interacts with TusE.

It is found in the cytoplasm. Part of a sulfur-relay system required for 2-thiolation of 5-methylaminomethyl-2-thiouridine (mnm(5)s(2)U) at tRNA wobble positions. Accepts sulfur from TusA and transfers it in turn to TusE. This chain is Sulfurtransferase TusD, found in Salmonella arizonae (strain ATCC BAA-731 / CDC346-86 / RSK2980).